The sequence spans 186 residues: Tumor necrosis factor, alpha-induced protein 8-like protein 2 B (186 aa).

Belongs to the TNFAIP8 family. TNFAIP8L2 subfamily.

In terms of biological role, acts as a negative regulator of innate and adaptive immunity by maintaining immune homeostasis. Negative regulator of Toll-like receptor and T-cell receptor function. Prevents hyperresponsiveness of the immune system and maintains immune homeostasis. Inhibits jun/ap1 and NF-kappa-B activation. Promotes Fas-induced apoptosis. This chain is Tumor necrosis factor, alpha-induced protein 8-like protein 2 B (tnfaip8l2b), found in Danio rerio (Zebrafish).